The chain runs to 93 residues: Putative pterin-4-alpha-carbinolamine dehydratase (93 aa).

It belongs to the pterin-4-alpha-carbinolamine dehydratase family.

It carries out the reaction (4aS,6R)-4a-hydroxy-L-erythro-5,6,7,8-tetrahydrobiopterin = (6R)-L-erythro-6,7-dihydrobiopterin + H2O. The polypeptide is Putative pterin-4-alpha-carbinolamine dehydratase (Thermomicrobium roseum (strain ATCC 27502 / DSM 5159 / P-2)).